Consider the following 479-residue polypeptide: MAQHTVYFPDAFLTQMREAMPSTLSFDDFLAACQRPLRRSIRVNTLKISVADFLQLTAPYGWTLTPIPWCEEGFWIERDNEDALPLGSTAEHLSGLFYIQEASSMLPVAALFADGNAPQRVMDVAAAPGSKTTQISARMNNEGAILANEFSASRVKVLHANISRCGISNVALTHFDGRVFGAAVPEMFDAILLDAPCSGEGVVRKDPDALKNWSPESNQEIAATQRELIDSAFHALRPGGTLVYSTCTLNQEENEAVCLWLKETYPDAVEFLPLGDLFPGANKALTEEGFLHVFPQIYDCEGFFVARLRKTQAIPALPAPKYKVGNFPFSPVKDREAGQIRQAAAGVGLNWDENLRLWQRDKELWLFPVGIEALIGKVRFSRLGIKLAETHNKGYRWQHEAVIALATPDNVNAFELTPQEAEEWYRGRDVYPQAAPVADDVLVTFQHQPIGLAKRIGSRLKNSYPRELVRDGKLFTGNA.

Residues 125 to 131, Glu-149, Asp-176, and Asp-194 contribute to the S-adenosyl-L-methionine site; that span reads AAAPGSK. Cys-247 acts as the Nucleophile in catalysis.

It belongs to the class I-like SAM-binding methyltransferase superfamily. RsmB/NOP family.

The protein localises to the cytoplasm. It catalyses the reaction cytidine(1407) in 16S rRNA + S-adenosyl-L-methionine = 5-methylcytidine(1407) in 16S rRNA + S-adenosyl-L-homocysteine + H(+). Functionally, specifically methylates the cytosine at position 1407 (m5C1407) of 16S rRNA. The chain is Ribosomal RNA small subunit methyltransferase F from Shigella sonnei (strain Ss046).